Here is a 467-residue protein sequence, read N- to C-terminus: UPF0236 protein TTE0033/TTE0744/TTE0838/TTE0852/TTE1082/TTE1247/TTE1519/TTE1678/TTE1739/TTE1823/TTE2212 (467 aa).

Belongs to the UPF0236 family.

The chain is UPF0236 protein TTE0033/TTE0744/TTE0838/TTE0852/TTE1082/TTE1247/TTE1519/TTE1678/TTE1739/TTE1823/TTE2212 from Caldanaerobacter subterraneus subsp. tengcongensis (strain DSM 15242 / JCM 11007 / NBRC 100824 / MB4) (Thermoanaerobacter tengcongensis).